The chain runs to 312 residues: Carbamate kinase 2 (312 aa).

It belongs to the carbamate kinase family.

It is found in the cytoplasm. It carries out the reaction hydrogencarbonate + NH4(+) + ATP = carbamoyl phosphate + ADP + H2O + H(+). It participates in metabolic intermediate metabolism; carbamoyl phosphate degradation; CO(2) and NH(3) from carbamoyl phosphate: step 1/1. This Enterococcus faecalis (strain ATCC 700802 / V583) protein is Carbamate kinase 2 (arcC2).